Here is a 456-residue protein sequence, read N- to C-terminus: Protein MGA1 (456 aa).

The DNA-binding element occupies 3–118; that stretch reads PKTFVHQLHA…ILNKIQRKST (116 aa). The segment at 229-299 is disordered; that stretch reads SIVQPQQPQQ…QPLPTVPPYS (71 aa). Low complexity-rich tracts occupy residues 231 to 246, 253 to 267, and 283 to 299; these read VQPQ…QALS, SGTL…TTSL, and QQQQ…PPYS.

The protein belongs to the HSF family.

The protein localises to the nucleus. The polypeptide is Protein MGA1 (MGA1) (Saccharomyces cerevisiae (strain ATCC 204508 / S288c) (Baker's yeast)).